Reading from the N-terminus, the 251-residue chain is Ubiquinone/menaquinone biosynthesis C-methyltransferase UbiE (251 aa).

S-adenosyl-L-methionine-binding positions include T74, D95, and 123–124 (NA).

The protein belongs to the class I-like SAM-binding methyltransferase superfamily. MenG/UbiE family.

It carries out the reaction a 2-demethylmenaquinol + S-adenosyl-L-methionine = a menaquinol + S-adenosyl-L-homocysteine + H(+). It catalyses the reaction a 2-methoxy-6-(all-trans-polyprenyl)benzene-1,4-diol + S-adenosyl-L-methionine = a 5-methoxy-2-methyl-3-(all-trans-polyprenyl)benzene-1,4-diol + S-adenosyl-L-homocysteine + H(+). It functions in the pathway quinol/quinone metabolism; menaquinone biosynthesis; menaquinol from 1,4-dihydroxy-2-naphthoate: step 2/2. It participates in cofactor biosynthesis; ubiquinone biosynthesis. In terms of biological role, methyltransferase required for the conversion of demethylmenaquinol (DMKH2) to menaquinol (MKH2) and the conversion of 2-polyprenyl-6-methoxy-1,4-benzoquinol (DDMQH2) to 2-polyprenyl-3-methyl-6-methoxy-1,4-benzoquinol (DMQH2). The sequence is that of Ubiquinone/menaquinone biosynthesis C-methyltransferase UbiE from Shewanella putrefaciens (strain CN-32 / ATCC BAA-453).